The primary structure comprises 282 residues: V-set domain-containing T-cell activation inhibitor 1 (282 aa).

The signal sequence occupies residues 1–24 (MASLGQILFWSIISIIIILAGAIA). Residues 25 to 259 (LIIGFGISGR…HLQLLNSKAS (235 aa)) lie on the Extracellular side of the membrane. Ig-like V-type domains are found at residues 35 to 146 (HSIT…LEYK) and 153 to 241 (PEVN…IKVT). 2 disulfide bridges follow: cysteine 56–cysteine 130 and cysteine 168–cysteine 225. N-linked (GlcNAc...) asparagine glycosylation is present at asparagine 216. A helical membrane pass occupies residues 260 to 280 (LCVSSFFAISWALLPLSPYLM). Residues 281 to 282 (LK) are Cytoplasmic-facing.

Belongs to the immunoglobulin superfamily. BTN/MOG family. Post-translationally, N-glycosylated. As to expression, overexpressed in breast, ovarian, endometrial, renal cell (RCC) and non-small-cell lung cancers (NSCLC). Expressed on activated T- and B-cells, monocytes and dendritic cells, but not expressed in most normal tissues (at protein level). Widely expressed, including in kidney, liver, lung, ovary, placenta, spleen and testis.

The protein resides in the cell membrane. Negatively regulates T-cell-mediated immune response by inhibiting T-cell activation, proliferation, cytokine production and development of cytotoxicity. When expressed on the cell surface of tumor macrophages, plays an important role, together with regulatory T-cells (Treg), in the suppression of tumor-associated antigen-specific T-cell immunity. Involved in promoting epithelial cell transformation. The polypeptide is V-set domain-containing T-cell activation inhibitor 1 (Homo sapiens (Human)).